A 476-amino-acid polypeptide reads, in one-letter code: CBL-interacting protein kinase 30 (476 aa).

Residues 17 to 272 (YKLGRLLGRG…ISKIMDRPWF (256 aa)) enclose the Protein kinase domain. ATP contacts are provided by residues 23–31 (LGRGTFAKV) and Lys-46. Asp-140 acts as the Proton acceptor in catalysis. An activation loop region spans residues 158–187 (DFGLSALDGGLRGDGLLHTTCGTPAYVAPE). The interval 296 to 315 (KEASQQHDDEEDDGFAREKK) is disordered. Residues 299-353 (SQQHDDEEDDGFAREKKKRSNVIMSSPVIDVRPSSMNAFDIISRSRGLDLSKMFD) enclose the NAF domain. Residues 358 to 387 (RSEARFSTRETTTAIVSKLEEIAEAGRFSF) are PPI.

It belongs to the protein kinase superfamily. CAMK Ser/Thr protein kinase family. SNF1 subfamily. Mn(2+) is required as a cofactor.

The enzyme catalyses L-seryl-[protein] + ATP = O-phospho-L-seryl-[protein] + ADP + H(+). It carries out the reaction L-threonyl-[protein] + ATP = O-phospho-L-threonyl-[protein] + ADP + H(+). CIPK serine-threonine protein kinases interact with CBL proteins. Binding of a CBL protein to the regulatory NAF domain of CIPK protein lead to the activation of the kinase in a calcium-dependent manner. The protein is CBL-interacting protein kinase 30 (CIPK30) of Oryza sativa subsp. japonica (Rice).